Reading from the N-terminus, the 282-residue chain is DNA-3-methyladenine glycosylase 2 (282 aa).

The active-site Proton acceptor is Asp-238.

This sequence belongs to the alkylbase DNA glycosidase AlkA family. Monomer.

The catalysed reaction is Hydrolysis of alkylated DNA, releasing 3-methyladenine, 3-methylguanine, 7-methylguanine and 7-methyladenine.. Its function is as follows. Hydrolysis of the deoxyribose N-glycosidic bond to excise 3-methyladenine, 3-methylguanine, 7-methylguanine, O2-methylthymine, and O2-methylcytosine from the damaged DNA polymer formed by alkylation lesions. In Escherichia coli (strain K12), this protein is DNA-3-methyladenine glycosylase 2 (alkA).